The primary structure comprises 217 residues: Adenylate kinase (217 aa).

Residue 10–15 participates in ATP binding; that stretch reads GIGKGT. The segment at 30–59 is NMP; it reads ATGDIFRKNFQENTPLGKESKKFINKGLLV. AMP contacts are provided by residues T31, R36, 57–59, 85–88, and Q92; these read LLV and GFPR. The tract at residues 126-163 is LID; sequence GRRICSHCGKVYHLDNLPPKIEGICDKDQKKLIQREDD. Position 127 (R127) interacts with ATP. 2 residues coordinate Zn(2+): C130 and C133. Residue 136-137 participates in ATP binding; it reads VY. Residues C150 and D153 each coordinate Zn(2+). AMP contacts are provided by R160 and R171. Q199 contributes to the ATP binding site.

This sequence belongs to the adenylate kinase family. As to quaternary structure, monomer.

Its subcellular location is the cytoplasm. It carries out the reaction AMP + ATP = 2 ADP. It participates in purine metabolism; AMP biosynthesis via salvage pathway; AMP from ADP: step 1/1. Catalyzes the reversible transfer of the terminal phosphate group between ATP and AMP. Plays an important role in cellular energy homeostasis and in adenine nucleotide metabolism. In Phytoplasma australiense, this protein is Adenylate kinase.